A 132-amino-acid chain; its full sequence is Small ribosomal subunit protein uS8 (132 aa).

The protein belongs to the universal ribosomal protein uS8 family. In terms of assembly, part of the 30S ribosomal subunit. Contacts proteins S5 and S12.

Its function is as follows. One of the primary rRNA binding proteins, it binds directly to 16S rRNA central domain where it helps coordinate assembly of the platform of the 30S subunit. The chain is Small ribosomal subunit protein uS8 from Leuconostoc mesenteroides subsp. mesenteroides (strain ATCC 8293 / DSM 20343 / BCRC 11652 / CCM 1803 / JCM 6124 / NCDO 523 / NBRC 100496 / NCIMB 8023 / NCTC 12954 / NRRL B-1118 / 37Y).